A 417-amino-acid chain; its full sequence is Putative competence-damage inducible protein (417 aa).

The protein belongs to the CinA family.

The chain is Putative competence-damage inducible protein from Leuconostoc citreum (strain KM20).